Reading from the N-terminus, the 418-residue chain is MKLKSGFLGLLYSRGYFNQCTDLAELDQLMSKECVIAYIGFDCTARSLHIGSLMQIMILRYLQKCGHKPIVLLGNGTTKIGDPSGKDKSRTLLSSSDIQENTLGIRKVLEKFIVCGDGVSDALLVYNAEWLDKLNYIDFLRNIGRHFSVNNMLTFDSVKLRLEREQNLSFLEFNYMLLQAYDFIELNQRYNCLLQIGGSDQWGNIVNGVELGRKLKLPQLFGLTTHLLLTSTGEKMGKTANGAVWLDGEMYSPADYWQYFRNVKDEDVGRFLRLFTELPLTEIEKLENLKGYEINEAKKILATEATRICHGEKIAQDIAYDALKVFECNDHSGLPVFYVCKSEIELGLSVVKLLQVSGMEKSNSSAKRLINDKGCKINDIIILDVNYKLSLQDFCGMSYIKLSCGKKRHLKVVLESNL.

Residue Y38 coordinates L-tyrosine. Residues C43–S52 carry the 'HIGH' region motif. 2 residues coordinate L-tyrosine: Y175 and Q179. The 'KMSKS' region signature appears at K235–T239. Residue K238 coordinates ATP. Residues L348–V413 form the S4 RNA-binding domain.

This sequence belongs to the class-I aminoacyl-tRNA synthetase family. TyrS type 1 subfamily. Homodimer.

Its subcellular location is the cytoplasm. The enzyme catalyses tRNA(Tyr) + L-tyrosine + ATP = L-tyrosyl-tRNA(Tyr) + AMP + diphosphate + H(+). Catalyzes the attachment of tyrosine to tRNA(Tyr) in a two-step reaction: tyrosine is first activated by ATP to form Tyr-AMP and then transferred to the acceptor end of tRNA(Tyr). The protein is Tyrosine--tRNA ligase of Ehrlichia ruminantium (strain Gardel).